The chain runs to 108 residues: Curli assembly protein CsgC (108 aa).

Positions 1 to 8 are cleaved as a signal peptide; it reads MHTLLLLA.

This sequence belongs to the CsgC/AgfC family.

It localises to the periplasm. In terms of biological role, plays a role in the extracellular assembly of CsgA into thin aggregative fimbriae (Tafi) fibers. Assembly may also require CsgE. Tafi are thought to be assembled via an extracellular nucleation-precipitation (ENP) pathway, and possibly also via an intracellular non-CsgC-dependent pathway. In Salmonella arizonae (strain ATCC BAA-731 / CDC346-86 / RSK2980), this protein is Curli assembly protein CsgC.